The chain runs to 234 residues: Leucyl/phenylalanyl-tRNA--protein transferase (234 aa).

Belongs to the L/F-transferase family.

Its subcellular location is the cytoplasm. The enzyme catalyses N-terminal L-lysyl-[protein] + L-leucyl-tRNA(Leu) = N-terminal L-leucyl-L-lysyl-[protein] + tRNA(Leu) + H(+). It carries out the reaction N-terminal L-arginyl-[protein] + L-leucyl-tRNA(Leu) = N-terminal L-leucyl-L-arginyl-[protein] + tRNA(Leu) + H(+). It catalyses the reaction L-phenylalanyl-tRNA(Phe) + an N-terminal L-alpha-aminoacyl-[protein] = an N-terminal L-phenylalanyl-L-alpha-aminoacyl-[protein] + tRNA(Phe). Functions in the N-end rule pathway of protein degradation where it conjugates Leu, Phe and, less efficiently, Met from aminoacyl-tRNAs to the N-termini of proteins containing an N-terminal arginine or lysine. This Escherichia coli O157:H7 (strain EC4115 / EHEC) protein is Leucyl/phenylalanyl-tRNA--protein transferase.